A 393-amino-acid chain; its full sequence is NAD(P)H-quinone oxidoreductase subunit H, chloroplastic (393 aa).

It belongs to the complex I 49 kDa subunit family. As to quaternary structure, NDH is composed of at least 16 different subunits, 5 of which are encoded in the nucleus.

It localises to the plastid. The protein resides in the chloroplast thylakoid membrane. The enzyme catalyses a plastoquinone + NADH + (n+1) H(+)(in) = a plastoquinol + NAD(+) + n H(+)(out). It carries out the reaction a plastoquinone + NADPH + (n+1) H(+)(in) = a plastoquinol + NADP(+) + n H(+)(out). Functionally, NDH shuttles electrons from NAD(P)H:plastoquinone, via FMN and iron-sulfur (Fe-S) centers, to quinones in the photosynthetic chain and possibly in a chloroplast respiratory chain. The immediate electron acceptor for the enzyme in this species is believed to be plastoquinone. Couples the redox reaction to proton translocation, and thus conserves the redox energy in a proton gradient. In Zygnema circumcarinatum (Green alga), this protein is NAD(P)H-quinone oxidoreductase subunit H, chloroplastic.